Reading from the N-terminus, the 194-residue chain is NAD(P)H-quinone oxidoreductase subunit I (194 aa).

4Fe-4S ferredoxin-type domains follow at residues 55 to 84 and 95 to 124; these read GRIH…VDWE and NHYS…MTEE. [4Fe-4S] cluster is bound by residues Cys-64, Cys-67, Cys-70, Cys-74, Cys-104, Cys-107, Cys-110, and Cys-114. The disordered stretch occupies residues 173-194; that stretch reads DLPANAPRPGARPEDLVEKTEA. Positions 183–194 are enriched in basic and acidic residues; that stretch reads ARPEDLVEKTEA.

The protein belongs to the complex I 23 kDa subunit family. NDH-1 is composed of at least 11 different subunits. [4Fe-4S] cluster serves as cofactor.

It is found in the cellular thylakoid membrane. The enzyme catalyses a plastoquinone + NADH + (n+1) H(+)(in) = a plastoquinol + NAD(+) + n H(+)(out). It catalyses the reaction a plastoquinone + NADPH + (n+1) H(+)(in) = a plastoquinol + NADP(+) + n H(+)(out). In terms of biological role, NDH-1 shuttles electrons from an unknown electron donor, via FMN and iron-sulfur (Fe-S) centers, to quinones in the respiratory and/or the photosynthetic chain. The immediate electron acceptor for the enzyme in this species is believed to be plastoquinone. Couples the redox reaction to proton translocation, and thus conserves the redox energy in a proton gradient. This Nostoc sp. (strain PCC 7120 / SAG 25.82 / UTEX 2576) protein is NAD(P)H-quinone oxidoreductase subunit I.